Consider the following 152-residue polypeptide: UPF0178 protein YaiI (152 aa).

This sequence belongs to the UPF0178 family.

This is UPF0178 protein YaiI from Escherichia coli O6:K15:H31 (strain 536 / UPEC).